We begin with the raw amino-acid sequence, 451 residues long: Trigger factor (451 aa).

The region spanning 173-258 (GDRVTLDFVG…LKKIEWAHLP (86 aa)) is the PPIase FKBP-type domain.

It belongs to the FKBP-type PPIase family. Tig subfamily.

It is found in the cytoplasm. It catalyses the reaction [protein]-peptidylproline (omega=180) = [protein]-peptidylproline (omega=0). In terms of biological role, involved in protein export. Acts as a chaperone by maintaining the newly synthesized protein in an open conformation. Functions as a peptidyl-prolyl cis-trans isomerase. The polypeptide is Trigger factor (Cupriavidus necator (strain ATCC 17699 / DSM 428 / KCTC 22496 / NCIMB 10442 / H16 / Stanier 337) (Ralstonia eutropha)).